The chain runs to 300 residues: NAD kinase (300 aa).

The Proton acceptor role is filled by aspartate 75. Residues 75-76 (DG), 149-150 (ND), arginine 177, aspartate 179, 190-195 (TAYALS), alanine 214, and glutamine 248 contribute to the NAD(+) site.

Belongs to the NAD kinase family. Requires a divalent metal cation as cofactor.

It localises to the cytoplasm. The catalysed reaction is NAD(+) + ATP = ADP + NADP(+) + H(+). Its function is as follows. Involved in the regulation of the intracellular balance of NAD and NADP, and is a key enzyme in the biosynthesis of NADP. Catalyzes specifically the phosphorylation on 2'-hydroxyl of the adenosine moiety of NAD to yield NADP. In Burkholderia mallei (strain SAVP1), this protein is NAD kinase.